Here is a 389-residue protein sequence, read N- to C-terminus: TelA-like protein SH1505 (389 aa).

Belongs to the TelA family.

This Staphylococcus haemolyticus (strain JCSC1435) protein is TelA-like protein SH1505.